The primary structure comprises 98 residues: ESAT-6-like protein EsxW (98 aa).

The protein belongs to the WXG100 family. CFP-10 subfamily. As to quaternary structure, forms a tight 1:1 complex with EsxV. The complex is destabilized at low pH. Unfolding of the proteins is required for dissociation of the complex and membrane binding.

Its subcellular location is the secreted. This is ESAT-6-like protein EsxW from Mycobacterium tuberculosis (strain ATCC 25618 / H37Rv).